A 101-amino-acid polypeptide reads, in one-letter code: Small ribosomal subunit protein uS14 (101 aa).

It belongs to the universal ribosomal protein uS14 family. In terms of assembly, part of the 30S ribosomal subunit. Contacts proteins S3 and S10.

Its function is as follows. Binds 16S rRNA, required for the assembly of 30S particles and may also be responsible for determining the conformation of the 16S rRNA at the A site. This Dinoroseobacter shibae (strain DSM 16493 / NCIMB 14021 / DFL 12) protein is Small ribosomal subunit protein uS14.